Consider the following 297-residue polypeptide: Phosphatidylinositol N-acetylglucosaminyltransferase subunit C (297 aa).

The next 4 membrane-spanning stretches (helical) occupy residues 67–87, 88–108, 153–173, and 239–259; these read VFVV…WLFG, TGLA…GGDG, AVFM…AAIV, and AFGG…LLLF.

It belongs to the PIGC family. As to quaternary structure, component of the glycosylphosphatidylinositol-N-acetylglucosaminyltransferase (GPI-GnT) complex composed at least by PIGA, PIGC, PIGH, PIGP, PIGQ, PIGY and DPM2. Interacts with PIGQ. Interacts with the heterodimer PIGA:PIGH.

It localises to the endoplasmic reticulum membrane. It functions in the pathway glycolipid biosynthesis; glycosylphosphatidylinositol-anchor biosynthesis. Its function is as follows. Part of the glycosylphosphatidylinositol-N-acetylglucosaminyltransferase (GPI-GnT) complex that catalyzes the transfer of N-acetylglucosamine from UDP-N-acetylglucosamine to phosphatidylinositol and participates in the first step of GPI biosynthesis. This Mus musculus (Mouse) protein is Phosphatidylinositol N-acetylglucosaminyltransferase subunit C.